Consider the following 281-residue polypeptide: Very long chain fatty acid elongase 7 (281 aa).

Ala2 carries the post-translational modification N-acetylalanine. Residues 2 to 27 (AFSDLTSRTVRFYDNWIKDADPRVEN) are Lumenal-facing. Residues 28 to 48 (WLLMSSPLPQTIILGLYVYFV) form a helical membrane-spanning segment. Over 49-72 (TSLGPKLMENRKPFELKKAMITYN) the chain is Cytoplasmic. The chain crosses the membrane as a helical span at residues 73-93 (FFIVLFSVYMCYEFVMSGWGT). Residues 94–115 (GYSFRCDIVDYSQSPRAMRMVH) lie on the Lumenal side of the membrane. Cysteines 99 and 231 form a disulfide. A helical membrane pass occupies residues 116-136 (TCWLYYFSKFIELFDTIFFVL). 3-oxoeicosanoyl-CoA contacts are provided by Lys124, Arg137, Lys139, Gln142, and His147. Topologically, residues 137-142 (RKKNSQ) are cytoplasmic. A helical transmembrane segment spans residues 143 to 162 (VTFLHVFHHTIMPWTWWFGV). The short motif at 147-151 (HVFHH) is the HxxHH motif element. The active-site Nucleophile is His150. The Lumenal portion of the chain corresponds to 163-176 (KFAAGGLGTFHALL). A helical membrane pass occupies residues 177–197 (NTAVHVVMYFYYGLCAMGPAY). Residues Tyr187, Lys204, Thr208, and Gln211 each contribute to the 3-oxoeicosanoyl-CoA site. The Cytoplasmic portion of the chain corresponds to 198 to 206 (QKYLWWKKH). The chain crosses the membrane as a helical span at residues 207–227 (LTSLQLVQFVLVTVHIGQIFF). The Lumenal portion of the chain corresponds to 228-236 (MEDCNYQYP). A helical transmembrane segment spans residues 237–257 (VFLYIIMSYGCIFLLLFLHFW). Over 258 to 281 (YRAYTKGQRLPKTMENGNCKSKHH) the chain is Cytoplasmic. Arg266 lines the 3-oxoeicosanoyl-CoA pocket. The Di-lysine motif motif lies at 277–281 (KSKHH).

This sequence belongs to the ELO family. ELOVL7 subfamily. As to quaternary structure, homodimer. Interacts with TECR.

It localises to the endoplasmic reticulum membrane. It carries out the reaction a very-long-chain acyl-CoA + malonyl-CoA + H(+) = a very-long-chain 3-oxoacyl-CoA + CO2 + CoA. It catalyses the reaction eicosanoyl-CoA + malonyl-CoA + H(+) = 3-oxodocosanoyl-CoA + CO2 + CoA. The enzyme catalyses (5Z,8Z,11Z,14Z)-eicosatetraenoyl-CoA + malonyl-CoA + H(+) = (7Z,10Z,13Z,16Z)-3-oxodocosatetraenoyl-CoA + CO2 + CoA. The catalysed reaction is (6Z,9Z,12Z)-octadecatrienoyl-CoA + malonyl-CoA + H(+) = (8Z,11Z,14Z)-3-oxoeicosatrienoyl-CoA + CO2 + CoA. It carries out the reaction (9Z,12Z)-octadecadienoyl-CoA + malonyl-CoA + H(+) = (11Z,14Z)-3-oxoicosa-11,14-dienoyl-CoA + CO2 + CoA. It catalyses the reaction (9Z)-octadecenoyl-CoA + malonyl-CoA + H(+) = 3-oxo-(11Z)-eicosenoyl-CoA + CO2 + CoA. The enzyme catalyses octadecanoyl-CoA + malonyl-CoA + H(+) = 3-oxoeicosanoyl-CoA + CO2 + CoA. The catalysed reaction is hexadecanoyl-CoA + malonyl-CoA + H(+) = 3-oxooctadecanoyl-CoA + CO2 + CoA. It carries out the reaction (9Z,12Z,15Z)-octadecatrienoyl-CoA + malonyl-CoA + H(+) = (11Z,14Z,17Z)-3-oxoeicosatrienoyl-CoA + CO2 + CoA. The protein operates within lipid metabolism; fatty acid biosynthesis. Functionally, catalyzes the first and rate-limiting reaction of the four reactions that constitute the long-chain fatty acids elongation cycle. This endoplasmic reticulum-bound enzymatic process allows the addition of 2 carbons to the chain of long- and very long-chain fatty acids (VLCFAs) per cycle. Condensing enzyme with higher activity toward C18 acyl-CoAs, especially C18:3(n-3) acyl-CoAs and C18:3(n-6)-CoAs. Also active toward C20:4-, C18:0-, C18:1-, C18:2- and C16:0-CoAs, and weakly toward C20:0-CoA. Little or no activity toward C22:0-, C24:0-, or C26:0-CoAs. May participate in the production of saturated and polyunsaturated VLCFAs of different chain lengths that are involved in multiple biological processes as precursors of membrane lipids and lipid mediators. This chain is Very long chain fatty acid elongase 7, found in Rattus norvegicus (Rat).